The primary structure comprises 324 residues: Cathepsin L-like proteinase (324 aa).

The signal sequence occupies residues 1 to 16; the sequence is MKLIIALAALIVVINA. Intrachain disulfides connect Cys131/Cys174, Cys165/Cys206, and Cys263/Cys312. Cys134 is a catalytic residue. Active-site residues include His270 and Asn290.

This sequence belongs to the peptidase C1 family. Expressed in larval carcasses and gut, and adult gut.

The protein is Cathepsin L-like proteinase of Phaedon cochleariae (Mustard beetle).